A 394-amino-acid chain; its full sequence is Probable peptidoglycan glycosyltransferase FtsW (394 aa).

The Cytoplasmic portion of the chain corresponds to methionine 1–tryptophan 26. Residues leucine 27 to valine 47 form a helical membrane-spanning segment. The Periplasmic portion of the chain corresponds to methionine 48–proline 57. A helical membrane pass occupies residues phenylalanine 58–valine 78. The Cytoplasmic portion of the chain corresponds to valine 79–lysine 88. Residues isoleucine 89–isoleucine 109 form a helical membrane-spanning segment. The Periplasmic portion of the chain corresponds to glycine 110–arginine 118. Residues tryptophan 119–phenylalanine 139 traverse the membrane as a helical segment. The Cytoplasmic segment spans residues tyrosine 140 to glutamate 154. A helical membrane pass occupies residues serine 155–leucine 175. Residues glutamate 176–proline 177 lie on the Periplasmic side of the membrane. Residues aspartate 178 to valine 198 traverse the membrane as a helical segment. Over lysine 199 to arginine 201 the chain is Cytoplasmic. A helical transmembrane segment spans residues tyrosine 202–proline 222. Residues tyrosine 223–aspartate 278 lie on the Periplasmic side of the membrane. Residues phenylalanine 279–leucine 299 form a helical membrane-spanning segment. Residues tyrosine 300–tyrosine 327 lie on the Cytoplasmic side of the membrane. The chain crosses the membrane as a helical span at residues glycine 328–leucine 348. At proline 349–threonine 354 the chain is on the periplasmic side. Residues leucine 355 to leucine 375 traverse the membrane as a helical segment. Over leucine 376–alanine 394 the chain is Cytoplasmic.

It belongs to the SEDS family. FtsW subfamily.

It is found in the cell inner membrane. The enzyme catalyses [GlcNAc-(1-&gt;4)-Mur2Ac(oyl-L-Ala-gamma-D-Glu-L-Lys-D-Ala-D-Ala)](n)-di-trans,octa-cis-undecaprenyl diphosphate + beta-D-GlcNAc-(1-&gt;4)-Mur2Ac(oyl-L-Ala-gamma-D-Glu-L-Lys-D-Ala-D-Ala)-di-trans,octa-cis-undecaprenyl diphosphate = [GlcNAc-(1-&gt;4)-Mur2Ac(oyl-L-Ala-gamma-D-Glu-L-Lys-D-Ala-D-Ala)](n+1)-di-trans,octa-cis-undecaprenyl diphosphate + di-trans,octa-cis-undecaprenyl diphosphate + H(+). It participates in cell wall biogenesis; peptidoglycan biosynthesis. Peptidoglycan polymerase that is essential for cell division. This chain is Probable peptidoglycan glycosyltransferase FtsW, found in Legionella pneumophila subsp. pneumophila (strain Philadelphia 1 / ATCC 33152 / DSM 7513).